Reading from the N-terminus, the 343-residue chain is Heat-inducible transcription repressor HrcA (343 aa).

It belongs to the HrcA family.

Its function is as follows. Negative regulator of class I heat shock genes (grpE-dnaK-dnaJ and groELS operons). Prevents heat-shock induction of these operons. This Mycolicibacterium smegmatis (strain ATCC 700084 / mc(2)155) (Mycobacterium smegmatis) protein is Heat-inducible transcription repressor HrcA.